The chain runs to 493 residues: Protein kinase PINOID 2 (493 aa).

The tract at residues 1-53 (MAAIKEESDYDSSRSSLTAPDSRRSWISDIGSSSSVSARSFGGDTPASSCRYK) is disordered. A compositionally biased stretch (low complexity) spans 27 to 44 (ISDIGSSSSVSARSFGGD). Residues 80–443 (FRLVRRLGSG…SAEVKRHPFF (364 aa)) form the Protein kinase domain. ATP is bound by residues 86–94 (LGSGDLGNV) and K120. D216 functions as the Proton acceptor in the catalytic mechanism. A compositionally biased stretch (gly residues) spans 295 to 306 (GGGAAAGNNGDG). 2 disordered regions span residues 295 to 320 (GGGA…TAEP) and 458 to 493 (EVPA…FDYF). The segment covering 307 to 319 (DGNDEEAETETAE) has biased composition (acidic residues). Residues 444 to 493 (KGVNWALVRSVRPPEVPAPPAPAPKKVMTMSKKERQEPYNYRPENHFDYF) form the AGC-kinase C-terminal domain. Over residues 474–493 (SKKERQEPYNYRPENHFDYF) the composition is skewed to basic and acidic residues.

Belongs to the protein kinase superfamily. Ser/Thr protein kinase family.

The enzyme catalyses L-seryl-[protein] + ATP = O-phospho-L-seryl-[protein] + ADP + H(+). The catalysed reaction is L-threonyl-[protein] + ATP = O-phospho-L-threonyl-[protein] + ADP + H(+). In terms of biological role, serine/threonine-protein kinase involved in the regulation of auxin signaling. The chain is Protein kinase PINOID 2 (PID2) from Oryza sativa subsp. japonica (Rice).